Here is a 360-residue protein sequence, read N- to C-terminus: uncharacterized protein (360 aa).

The protein to P.multocida PM1082.

This is an uncharacterized protein from Pasteurella multocida (strain Pm70).